We begin with the raw amino-acid sequence, 299 residues long: rRNA methyltransferase (299 aa).

The interval 14 to 53 (AEKRSGRGRMAAARTTGAQSRKTAQRSGRSEADRRRRVHG) is disordered. Positions 21–31 (GRMAAARTTGA) are enriched in low complexity. S-adenosyl-L-methionine contacts are provided by N55, L57, G82, E103, D128, and N144.

The protein belongs to the class I-like SAM-binding methyltransferase superfamily. rRNA adenine N(6)-methyltransferase family.

In terms of biological role, probable RNA methylase. Confers resistance to carbomycin and several other macrolides, lincomycin and vernamycin B, but not to all macrolide-lincosamide-streptogramin B antibiotics. The protein is rRNA methyltransferase (carB) of Streptomyces thermotolerans.